Consider the following 383-residue polypeptide: Lipid-A-disaccharide synthase (383 aa).

The protein belongs to the LpxB family.

The enzyme catalyses a lipid X + a UDP-2-N,3-O-bis[(3R)-3-hydroxyacyl]-alpha-D-glucosamine = a lipid A disaccharide + UDP + H(+). It participates in bacterial outer membrane biogenesis; LPS lipid A biosynthesis. In terms of biological role, condensation of UDP-2,3-diacylglucosamine and 2,3-diacylglucosamine-1-phosphate to form lipid A disaccharide, a precursor of lipid A, a phosphorylated glycolipid that anchors the lipopolysaccharide to the outer membrane of the cell. In Trichlorobacter lovleyi (strain ATCC BAA-1151 / DSM 17278 / SZ) (Geobacter lovleyi), this protein is Lipid-A-disaccharide synthase.